The following is a 212-amino-acid chain: MKQLFRQWYDLSEIKKELTTRNWFPATSGNISIKVSHEPLTFLITASGKDKTKTTPDDFLLVDHVGVPVLETELRPSAETILHTHIYNNTNAGCVLHVHTTDNNVITNLYSDAVTLQNQEIIKALDIWEEGATIHIPIIENHAHIPTLGENFRKHIQGDSGAVLIRNHGITVWGRDSFDAKKRLEAYEFLFQFHIKLLSIQGGVSNGANSYS.

Zn(2+)-binding residues include His-97 and His-99.

This sequence belongs to the aldolase class II family. MtnB subfamily. In terms of assembly, homotetramer. Zn(2+) is required as a cofactor.

The enzyme catalyses 5-(methylsulfanyl)-D-ribulose 1-phosphate = 5-methylsulfanyl-2,3-dioxopentyl phosphate + H2O. It participates in amino-acid biosynthesis; L-methionine biosynthesis via salvage pathway; L-methionine from S-methyl-5-thio-alpha-D-ribose 1-phosphate: step 2/6. In terms of biological role, catalyzes the dehydration of methylthioribulose-1-phosphate (MTRu-1-P) into 2,3-diketo-5-methylthiopentyl-1-phosphate (DK-MTP-1-P). The sequence is that of Methylthioribulose-1-phosphate dehydratase from Bacillus cereus (strain B4264).